A 661-amino-acid polypeptide reads, in one-letter code: Threonine--tRNA ligase (661 aa).

Residues 1-64 (MSQAISLTFP…TTGRIEIITR (64 aa)) enclose the TGS domain. A catalytic region spans residues 245-546 (DHRRLGREMD…LIENFAGHMP (302 aa)). Zn(2+)-binding residues include C341, H392, and H523.

It belongs to the class-II aminoacyl-tRNA synthetase family. In terms of assembly, homodimer. The cofactor is Zn(2+).

The protein localises to the cytoplasm. The enzyme catalyses tRNA(Thr) + L-threonine + ATP = L-threonyl-tRNA(Thr) + AMP + diphosphate + H(+). Functionally, catalyzes the attachment of threonine to tRNA(Thr) in a two-step reaction: L-threonine is first activated by ATP to form Thr-AMP and then transferred to the acceptor end of tRNA(Thr). Also edits incorrectly charged L-seryl-tRNA(Thr). This chain is Threonine--tRNA ligase, found in Rhizobium johnstonii (strain DSM 114642 / LMG 32736 / 3841) (Rhizobium leguminosarum bv. viciae).